Here is a 566-residue protein sequence, read N- to C-terminus: Oxygen-dependent choline dehydrogenase (566 aa).

7 to 36 contributes to the FAD binding site; the sequence is DYIICGAGSAGNVLATRLTEDPNVTVLLLE. Residues 185-204 form a disordered region; that stretch reads EGFGPMDRTVTPKGRRASTA. Catalysis depends on histidine 474, which acts as the Proton acceptor.

It belongs to the GMC oxidoreductase family. The cofactor is FAD.

It carries out the reaction choline + A = betaine aldehyde + AH2. The enzyme catalyses betaine aldehyde + NAD(+) + H2O = glycine betaine + NADH + 2 H(+). Its pathway is amine and polyamine biosynthesis; betaine biosynthesis via choline pathway; betaine aldehyde from choline (cytochrome c reductase route): step 1/1. Functionally, involved in the biosynthesis of the osmoprotectant glycine betaine. Catalyzes the oxidation of choline to betaine aldehyde and betaine aldehyde to glycine betaine at the same rate. This Burkholderia vietnamiensis (strain G4 / LMG 22486) (Burkholderia cepacia (strain R1808)) protein is Oxygen-dependent choline dehydrogenase.